The sequence spans 274 residues: MEALRQRIETAFEARAEITPTTVEPSVRADVEKAIAMLDTGEARVAEKIDGQWNVHQWLKKAVLLSFRIFDNQVIDGAETKFFDKVPMKFADYDEARFKQEAIRVVPPAAVRKGSFIGKNTVLMPSYVNLGAYVDEGTMVDTWATVGSCAQIGKNVHLSGGVGIGGVLEPLQAGPTIIEDNCFIGARSEIVEGVVVEEGSVISMGVYIGQSTRIYDRETGEIHYGRVPAGSVVVSGTLPSQCGKYNLYAAIIVKKVDAKTRGKVGINELLRIVD.

2 residues coordinate substrate: Arg104 and Asp141.

This sequence belongs to the transferase hexapeptide repeat family. Homotrimer.

Its subcellular location is the cytoplasm. It catalyses the reaction (S)-2,3,4,5-tetrahydrodipicolinate + succinyl-CoA + H2O = (S)-2-succinylamino-6-oxoheptanedioate + CoA. The protein operates within amino-acid biosynthesis; L-lysine biosynthesis via DAP pathway; LL-2,6-diaminopimelate from (S)-tetrahydrodipicolinate (succinylase route): step 1/3. The chain is 2,3,4,5-tetrahydropyridine-2,6-dicarboxylate N-succinyltransferase from Shewanella loihica (strain ATCC BAA-1088 / PV-4).